Consider the following 370-residue polypeptide: A-type ATP synthase subunit C (370 aa).

The protein belongs to the V-ATPase V0D/AC39 subunit family. As to quaternary structure, has multiple subunits with at least A(3), B(3), C, D, E, F, H, I and proteolipid K(x).

The protein resides in the cell membrane. Component of the A-type ATP synthase that produces ATP from ADP in the presence of a proton gradient across the membrane. The protein is A-type ATP synthase subunit C of Pyrococcus horikoshii (strain ATCC 700860 / DSM 12428 / JCM 9974 / NBRC 100139 / OT-3).